Consider the following 164-residue polypeptide: uncharacterized protein (164 aa).

This is an uncharacterized protein from Acanthamoeba polyphaga (Amoeba).